We begin with the raw amino-acid sequence, 539 residues long: Chaperonin GroEL (539 aa).

Residues 29-32 (TLGP), 86-90 (DGTTT), G413, 476-478 (NAA), and D492 each bind ATP.

This sequence belongs to the chaperonin (HSP60) family. In terms of assembly, forms a cylinder of 14 subunits composed of two heptameric rings stacked back-to-back. Interacts with the co-chaperonin GroES.

Its subcellular location is the cytoplasm. It carries out the reaction ATP + H2O + a folded polypeptide = ADP + phosphate + an unfolded polypeptide.. Together with its co-chaperonin GroES, plays an essential role in assisting protein folding. The GroEL-GroES system forms a nano-cage that allows encapsulation of the non-native substrate proteins and provides a physical environment optimized to promote and accelerate protein folding. This Macrococcus caseolyticus (strain JCSC5402) (Macrococcoides caseolyticum) protein is Chaperonin GroEL.